We begin with the raw amino-acid sequence, 448 residues long: Probable D-serine dehydratase (448 aa).

Lysine 111 is modified (N6-(pyridoxal phosphate)lysine).

It belongs to the serine/threonine dehydratase family. DsdA subfamily. Requires pyridoxal 5'-phosphate as cofactor.

The catalysed reaction is D-serine = pyruvate + NH4(+). This chain is Probable D-serine dehydratase, found in Rhizobium etli (strain CIAT 652).